A 487-amino-acid polypeptide reads, in one-letter code: Probable cobyric acid synthase (487 aa).

The region spanning 246–431 is the GATase cobBQ-type domain; sequence LVRIAVIRLP…LHGLFMVPAA (186 aa). Residue cysteine 325 is the Nucleophile of the active site. Histidine 423 is an active-site residue.

It belongs to the CobB/CobQ family. CobQ subfamily.

It functions in the pathway cofactor biosynthesis; adenosylcobalamin biosynthesis. In terms of biological role, catalyzes amidations at positions B, D, E, and G on adenosylcobyrinic A,C-diamide. NH(2) groups are provided by glutamine, and one molecule of ATP is hydrogenolyzed for each amidation. The polypeptide is Probable cobyric acid synthase (Methanosphaerula palustris (strain ATCC BAA-1556 / DSM 19958 / E1-9c)).